Consider the following 497-residue polypeptide: Serine/threonine-protein phosphatase 2A 56 kDa regulatory subunit beta isoform (497 aa).

Residues 1–19 (METKLPPASTPTSPSSPGL) are compositionally biased toward low complexity. Disordered regions lie at residues 1 to 55 (METK…YQSN) and 475 to 497 (TQGAKEAPLQRLTPQVAASGGQS). A phosphoserine; by CLK2 mark is found at serine 32, serine 35, serine 44, serine 46, serine 47, and serine 48. Residues 34–45 (RSLRRARPRRSH) are compositionally biased toward basic residues.

The protein belongs to the phosphatase 2A regulatory subunit B56 family. In terms of assembly, component of the serine/threonine-protein phosphatase 2A complex (PP2A). This complex consists of a common heterodimeric core enzyme, composed of a 36 kDa catalytic subunit (subunit C) and a 65 kDa constant scaffold subunit (PR65 or subunit A), that associates with a variety of regulatory subunits. Proteins that associate with the core dimer include three families of regulatory subunits B (the R2/B/PR55/B55, R3/B''/PR72/PR130/PR59 and R5/B'/B56 families), the 48 kDa variable regulatory subunit, viral proteins, and cell signaling molecules. Interacts with SGO1. Interacts with AKT1. Interacts with CUL3 and KLHL15; this interaction leads to proteasomal degradation. Post-translationally, ubiquitinated by E3 CUL3-KLHL15 complex; this modification leads to proteasomal degradation. In terms of tissue distribution, highest expression in brain.

It localises to the cytoplasm. In terms of biological role, as the regulatory component of the serine/threonine-protein phosphatase 2A (PP2A) holoenzyme, modulates substrate specificity, subcellular localization, and responsiveness to phosphorylation. The phosphorylated form mediates the interaction between PP2A and AKT1, leading to AKT1 dephosphorylation. In Homo sapiens (Human), this protein is Serine/threonine-protein phosphatase 2A 56 kDa regulatory subunit beta isoform (PPP2R5B).